The sequence spans 462 residues: L-seryl-tRNA(Sec) selenium transferase (462 aa).

At K292 the chain carries N6-(pyridoxal phosphate)lysine.

Belongs to the SelA family. It depends on pyridoxal 5'-phosphate as a cofactor.

The protein localises to the cytoplasm. The catalysed reaction is L-seryl-tRNA(Sec) + selenophosphate + H(+) = L-selenocysteinyl-tRNA(Sec) + phosphate. It participates in aminoacyl-tRNA biosynthesis; selenocysteinyl-tRNA(Sec) biosynthesis; selenocysteinyl-tRNA(Sec) from L-seryl-tRNA(Sec) (bacterial route): step 1/1. In terms of biological role, converts seryl-tRNA(Sec) to selenocysteinyl-tRNA(Sec) required for selenoprotein biosynthesis. This is L-seryl-tRNA(Sec) selenium transferase from Geotalea daltonii (strain DSM 22248 / JCM 15807 / FRC-32) (Geobacter daltonii).